The primary structure comprises 544 residues: Protein nucleotidyltransferase YdiU (544 aa).

Residues Gly-133, Gly-135, Arg-136, Lys-155, Asp-167, Gly-168, Arg-218, and Arg-225 each contribute to the ATP site. Residue Asp-294 is the Proton acceptor of the active site. 2 residues coordinate Mg(2+): Asn-295 and Asp-304. Asp-304 lines the ATP pocket.

The protein belongs to the SELO family. Requires Mg(2+) as cofactor. Mn(2+) is required as a cofactor.

The enzyme catalyses L-seryl-[protein] + ATP = 3-O-(5'-adenylyl)-L-seryl-[protein] + diphosphate. It carries out the reaction L-threonyl-[protein] + ATP = 3-O-(5'-adenylyl)-L-threonyl-[protein] + diphosphate. The catalysed reaction is L-tyrosyl-[protein] + ATP = O-(5'-adenylyl)-L-tyrosyl-[protein] + diphosphate. It catalyses the reaction L-histidyl-[protein] + UTP = N(tele)-(5'-uridylyl)-L-histidyl-[protein] + diphosphate. The enzyme catalyses L-seryl-[protein] + UTP = O-(5'-uridylyl)-L-seryl-[protein] + diphosphate. It carries out the reaction L-tyrosyl-[protein] + UTP = O-(5'-uridylyl)-L-tyrosyl-[protein] + diphosphate. Functionally, nucleotidyltransferase involved in the post-translational modification of proteins. It can catalyze the addition of adenosine monophosphate (AMP) or uridine monophosphate (UMP) to a protein, resulting in modifications known as AMPylation and UMPylation. In Cupriavidus metallidurans (strain ATCC 43123 / DSM 2839 / NBRC 102507 / CH34) (Ralstonia metallidurans), this protein is Protein nucleotidyltransferase YdiU.